The chain runs to 509 residues: 2,3-bisphosphoglycerate-independent phosphoglycerate mutase (509 aa).

2 residues coordinate Mn(2+): aspartate 13 and serine 63. Catalysis depends on serine 63, which acts as the Phosphoserine intermediate. Substrate is bound by residues histidine 124, 154 to 155 (RD), arginine 186, arginine 192, 261 to 264 (RPDR), and lysine 335. Aspartate 400, histidine 404, aspartate 441, histidine 442, and histidine 459 together coordinate Mn(2+).

This sequence belongs to the BPG-independent phosphoglycerate mutase family. In terms of assembly, monomer. It depends on Mn(2+) as a cofactor.

It catalyses the reaction (2R)-2-phosphoglycerate = (2R)-3-phosphoglycerate. The protein operates within carbohydrate degradation; glycolysis; pyruvate from D-glyceraldehyde 3-phosphate: step 3/5. Its function is as follows. Catalyzes the interconversion of 2-phosphoglycerate and 3-phosphoglycerate. The polypeptide is 2,3-bisphosphoglycerate-independent phosphoglycerate mutase (Desulforudis audaxviator (strain MP104C)).